Here is a 274-residue protein sequence, read N- to C-terminus: 2,3,4,5-tetrahydropyridine-2,6-dicarboxylate N-succinyltransferase (274 aa).

This sequence belongs to the transferase hexapeptide repeat family.

The protein resides in the cytoplasm. It catalyses the reaction (S)-2,3,4,5-tetrahydrodipicolinate + succinyl-CoA + H2O = (S)-2-succinylamino-6-oxoheptanedioate + CoA. It functions in the pathway amino-acid biosynthesis; L-lysine biosynthesis via DAP pathway; LL-2,6-diaminopimelate from (S)-tetrahydrodipicolinate (succinylase route): step 1/3. The sequence is that of 2,3,4,5-tetrahydropyridine-2,6-dicarboxylate N-succinyltransferase from Erwinia tasmaniensis (strain DSM 17950 / CFBP 7177 / CIP 109463 / NCPPB 4357 / Et1/99).